The chain runs to 561 residues: Dihydroxy-acid dehydratase (561 aa).

C50 contributes to the [2Fe-2S] cluster binding site. D82 contacts Mg(2+). C123 contacts [2Fe-2S] cluster. Mg(2+) contacts are provided by D124 and K125. K125 is subject to N6-carboxylysine. C195 is a binding site for [2Fe-2S] cluster. E447 lines the Mg(2+) pocket. Residue S473 is the Proton acceptor of the active site.

It belongs to the IlvD/Edd family. As to quaternary structure, homodimer. It depends on [2Fe-2S] cluster as a cofactor. Mg(2+) is required as a cofactor.

The catalysed reaction is (2R)-2,3-dihydroxy-3-methylbutanoate = 3-methyl-2-oxobutanoate + H2O. It carries out the reaction (2R,3R)-2,3-dihydroxy-3-methylpentanoate = (S)-3-methyl-2-oxopentanoate + H2O. It participates in amino-acid biosynthesis; L-isoleucine biosynthesis; L-isoleucine from 2-oxobutanoate: step 3/4. Its pathway is amino-acid biosynthesis; L-valine biosynthesis; L-valine from pyruvate: step 3/4. Its function is as follows. Functions in the biosynthesis of branched-chain amino acids. Catalyzes the dehydration of (2R,3R)-2,3-dihydroxy-3-methylpentanoate (2,3-dihydroxy-3-methylvalerate) into 2-oxo-3-methylpentanoate (2-oxo-3-methylvalerate) and of (2R)-2,3-dihydroxy-3-methylbutanoate (2,3-dihydroxyisovalerate) into 2-oxo-3-methylbutanoate (2-oxoisovalerate), the penultimate precursor to L-isoleucine and L-valine, respectively. This Rippkaea orientalis (strain PCC 8801 / RF-1) (Cyanothece sp. (strain PCC 8801)) protein is Dihydroxy-acid dehydratase.